The primary structure comprises 193 residues: Interleukin-18 (193 aa).

Residues 1 to 36 (MAANLIEDNCINLVKMKFVNNTLYFKAESDEGLESD) constitute a propeptide that is removed on maturation.

This sequence belongs to the IL-1 family. Forms a ternary complex with ligand-binding receptor subunit IL18R1 and signaling receptor subunit IL18RAP at the plasma membrane. Mature IL18 first binds to IL18R1 forming a low affinity binary complex, which then interacts with IL18RAP to form a high affinity ternary complex that signals inside the cell. Interacts with cargo receptor TMED10; the interaction mediates the translocation from the cytoplasm into the ERGIC (endoplasmic reticulum-Golgi intermediate compartment) and thereby secretion. Post-translationally, the pro-IL-18 precursor is processed by CASP1, CASP4 or CASP5 to yield its mature, active form. The pro-IL-18 precursor features autoinhibitory interactions between the propeptide and the post-cleavage-site region, preventing recognition by the IL18R1 receptor. Processing by CASP1, CASP4 or CASP5 induces conformational changes to generate critical receptor-binding sites. The mature form is then secreted and released in the extracellular milieu by passing through the gasdermin-D (GSDMD) pore. In contrast, cleavage by CASP3 inactivates IL18.

The protein resides in the cytoplasm. The protein localises to the cytosol. It is found in the secreted. Its function is as follows. Pro-inflammatory cytokine primarily involved in epithelial barrier repair, polarized T-helper 1 (Th1) cell and natural killer (NK) cell immune responses. Upon binding to IL18R1 and IL18RAP, forms a signaling ternary complex which activates NF-kappa-B, triggering synthesis of inflammatory mediators. Synergizes with IL12/interleukin-12 to induce IFNG synthesis from T-helper 1 (Th1) cells and natural killer (NK) cells. Involved in transduction of inflammation downstream of pyroptosis: its mature form is specifically released in the extracellular milieu by passing through the gasdermin-D (GSDMD) pore. This is Interleukin-18 (IL18) from Canis lupus familiaris (Dog).